Here is a 686-residue protein sequence, read N- to C-terminus: Eomesodermin homolog (686 aa).

The tract at residues 27–46 (GGSGGSAGHLPSAAPSPQKL) is disordered. The span at 34-43 (GHLPSAAPSP) shows a compositional bias: low complexity. Serine 107 is subject to Phosphoserine. The segment at residues 276–456 (LWLKFHRHQT…HNPFAKGFRD (181 aa)) is a DNA-binding region (T-box). A required for transcription activation region spans residues 571–686 (AMAGWGGRGS…GGYYAFYTTP (116 aa)). The disordered stretch occupies residues 639–686 (ACKRRRLSPSNSSNENSPSIKCEDINAEEYSKDTSKGMGGYYAFYTTP). A compositionally biased stretch (low complexity) spans 646–657 (SPSNSSNENSPS). A compositionally biased stretch (basic and acidic residues) spans 659-673 (KCEDINAEEYSKDTS).

As to expression, expressed in CD8+ T-cells.

Its subcellular location is the nucleus. Functions as a transcriptional activator playing a crucial role during development. Functions in trophoblast differentiation and later in gastrulation, regulating both mesoderm delamination and endoderm specification. Plays a role in brain development being required for the specification and the proliferation of the intermediate progenitor cells and their progeny in the cerebral cortex. Required for differentiation and migration of unipolar dendritic brush cells. Also involved in the differentiation of CD8+ T-cells during immune response regulating the expression of lytic effector genes. This is Eomesodermin homolog (EOMES) from Homo sapiens (Human).